A 370-amino-acid polypeptide reads, in one-letter code: MKLNTLQLENYRNYDEVTLKCHPDVNILIGENAQGKTNLLESIYTLALAKSHRTSNDKELIRFNADYAKIEGELSYRHGTMPLTMFITKKGKQVKVNHLEQSRLTQYIGHLNVVLFAPEDLNIVKGSPQIRRRFIDMELGQISAVYLNDLAQYQRILKQKNNYLKQLQLGQKKDLTMLEVLNQQFAEYAMKVTDKRAHFIQELELLAKPIHAGITNDKEALSLNYLPSLKFDYAQNEAARLEEIMSILSDNMQREKERGISLFGPHRDDISFDVNGMDAQTYGSQGQQRTTALSIKLAEIELMNIEVGEYPILLLDDVLSELDDSRQTHLLSTIQHKVQTFVTTTSVDGIDHEIMNNAKLYRINQGEIIK.

30 to 37 contacts ATP; it reads GENAQGKT.

The protein belongs to the RecF family.

Its subcellular location is the cytoplasm. Its function is as follows. The RecF protein is involved in DNA metabolism; it is required for DNA replication and normal SOS inducibility. RecF binds preferentially to single-stranded, linear DNA. It also seems to bind ATP. This is DNA replication and repair protein RecF from Staphylococcus aureus (strain bovine RF122 / ET3-1).